A 393-amino-acid polypeptide reads, in one-letter code: Major outer membrane porin, serovar E (393 aa).

Residues 1–22 (MKKLLKSVLVFAALSSASSLQA) form the signal peptide.

This sequence belongs to the chlamydial porin (CP) (TC 1.B.2) family. Part of a disulfide cross-linked outer membrane complex (COMC) composed of the major outer membrane porin (MOMP), the small cysteine-rich protein (OmcA) and the large cysteine-rich periplasmic protein (OmcB).

The protein localises to the cell outer membrane. Functionally, in elementary bodies (EBs, the infectious stage, which is able to survive outside the host cell) provides the structural integrity of the outer envelope through disulfide cross-links with the small cysteine-rich protein and the large cysteine-rich periplasmic protein. It has been described in publications as the Sarkosyl-insoluble COMC (Chlamydia outer membrane complex), and serves as the functional equivalent of peptidoglycan. In terms of biological role, permits diffusion of specific solutes through the outer membrane. This chain is Major outer membrane porin, serovar E (ompA), found in Chlamydia trachomatis.